A 358-amino-acid polypeptide reads, in one-letter code: Protein-L-isoaspartate O-methyltransferase domain-containing protein 1 (358 aa).

G2 carries N-myristoyl glycine lipidation. S64 is an active-site residue. AdoMet binding motif stretches follow at residues 85–94 (LNLGSGTGYL), 160–164 (YDRIY), and 181–191 (LKVGGILVMPI). Positions 240–250 (VRNLQDLARIY) are BC-box. The segment at 300 to 339 (PLDSEEDERMEDDNKEEEDKDHSEALKPEEPPRNLLREKI) is disordered. Residues 302–318 (DSEEDERMEDDNKEEED) are compositionally biased toward acidic residues. The segment covering 319-339 (KDHSEALKPEEPPRNLLREKI) has biased composition (basic and acidic residues). The CUL-box stretch occupies residues 342-345 (LPLP).

It belongs to the methyltransferase superfamily. L-isoaspartyl/D-aspartyl protein methyltransferase family. As to quaternary structure, component of the probable ECS(PCMTD1) E3 ubiquitin-protein ligase complex, at least composed of CUL5, ELOB, ELOC, RBX2 and PCMTD1.

It is found in the cytoplasm. Its subcellular location is the membrane. Substrate recognition component of an ECS (Elongin BC-CUL5-SOCS-box protein) E3 ubiquitin ligase complex which mediates the ubiquitination and subsequent proteasomal degradation of target proteins. Specifically binds to the methyltransferase cofactor S-adenosylmethionine (AdoMet) via the N-terminal AdoMet binding motif, but does not display methyltransferase activity. May provide an alternate maintenance pathway for modified proteins by acting as a damage-specific E3 ubiquitin ligase adaptor protein. The sequence is that of Protein-L-isoaspartate O-methyltransferase domain-containing protein 1 (PCMTD1) from Gallus gallus (Chicken).